The chain runs to 403 residues: cAMP-dependent protein kinase regulatory subunit (403 aa).

Residues 1–155 (MADYTIPSEL…RIQASIGNNF (155 aa)) form a dimerization and phosphorylation region. A disordered region spans residues 79–125 (YAYSTDDGFGTEDDDDDDDDEDDEAAIPPPVVNRGRRTSVSAESMAP). The span at 87–103 (FGTEDDDDDDDDEDDEA) shows a compositional bias: acidic residues. S117 is modified (phosphoserine). 3',5'-cyclic AMP contacts are provided by residues 156–278 (LFRN…EEVP), E226, R235, 279–403 (LLSS…PGEH), E349, and R358.

Belongs to the cAMP-dependent kinase regulatory chain family. Tetramer, composed of 2 regulatory (R) and 2 catalytic (C) subunits. In the presence of cAMP it dissociates into 2 active monomeric C subunits and an R dimer that binds four cAMP molecules.

This chain is cAMP-dependent protein kinase regulatory subunit (PKAR), found in Blastocladiella emersonii (Aquatic fungus).